Consider the following 326-residue polypeptide: Polycomb complex protein BMI-1 (326 aa).

The RING-type zinc-finger motif lies at 18 to 57; it reads CVLCGGYFIDATTIIECLHSFCKTCIVRYLETSKYCPICD. The Nuclear localization signal signature appears at 81 to 95; sequence KLVPGLFKNEMKRRR. The segment at 162-182 is interaction with PHC2; that stretch reads RYLRCPAAMTVMHLRKFLRSK. The interval 164 to 228 is interaction with E4F1; the sequence is LRCPAAMTVM…GPLPLKYRVR (65 aa). The segment at 236 to 326 is disordered; the sequence is IGHQREGLSN…INGSSATSSG (91 aa). Over residues 265-278 the composition is skewed to low complexity; that stretch reads LPSTSSCLPSPSTP. A compositionally biased stretch (polar residues) spans 279–310; that stretch reads VQSPHPQFPHISSTMNGTSSSPGSNHQSSFTN. Over residues 315 to 326 the composition is skewed to low complexity; the sequence is SSINGSSATSSG.

Component of a PRC1-like complex.

The protein resides in the nucleus. Its subcellular location is the cytoplasm. In terms of biological role, component of a Polycomb group (PcG) multiprotein PRC1-like complex, a complex class required to maintain the transcriptionally repressive state of many genes, including Hox genes, throughout development. PcG PRC1 complex acts via chromatin remodeling and modification of histones; it mediates monoubiquitination of histone H2A 'Lys-119', rendering chromatin heritably changed in its expressibility. In the PRC1-like complex, regulates the E3 ubiquitin-protein ligase activity of RNF2/RING2. The polypeptide is Polycomb complex protein BMI-1 (BMI1) (Gallus gallus (Chicken)).